A 200-amino-acid chain; its full sequence is MSKYAGIVLAGGMSSRFGEPKALASWQGSTFIEHILKVMTSTLQEVVVISHSDIKERVEKLVQVPVIEDIPHYKGNGPLAGIVSGMEYIEADWYAIMPCDAPNVSHEWFTILLEQTSNEYDAVVPIINGRKQPLLAAYHNRVKEKIYALLQDEKRSMGQLLSQCNVKYVSGEDVQANADWFINVNTKEEYVQAQKDLSNK.

Residues 9–11, Lys-21, Asp-69, and Asp-100 each bind GTP; that span reads LAG. Mg(2+) is bound at residue Asp-100.

This sequence belongs to the MobA family. Mg(2+) serves as cofactor.

Its subcellular location is the cytoplasm. The catalysed reaction is Mo-molybdopterin + GTP + H(+) = Mo-molybdopterin guanine dinucleotide + diphosphate. Transfers a GMP moiety from GTP to Mo-molybdopterin (Mo-MPT) cofactor (Moco or molybdenum cofactor) to form Mo-molybdopterin guanine dinucleotide (Mo-MGD) cofactor. The polypeptide is Probable molybdenum cofactor guanylyltransferase (Bacillus anthracis (strain CDC 684 / NRRL 3495)).